Consider the following 129-residue polypeptide: Small ribosomal subunit protein uS11 (129 aa).

Belongs to the universal ribosomal protein uS11 family. As to quaternary structure, part of the 30S ribosomal subunit. Interacts with proteins S7 and S18. Binds to IF-3.

Located on the platform of the 30S subunit, it bridges several disparate RNA helices of the 16S rRNA. Forms part of the Shine-Dalgarno cleft in the 70S ribosome. The protein is Small ribosomal subunit protein uS11 of Pectobacterium atrosepticum (strain SCRI 1043 / ATCC BAA-672) (Erwinia carotovora subsp. atroseptica).